Consider the following 163-residue polypeptide: Cyanate hydratase (163 aa).

Active-site residues include Arg-103, Glu-106, and Ser-129.

The protein belongs to the cyanase family.

The enzyme catalyses cyanate + hydrogencarbonate + 3 H(+) = NH4(+) + 2 CO2. In terms of biological role, catalyzes the reaction of cyanate with bicarbonate to produce ammonia and carbon dioxide. In Paracoccidioides lutzii (strain ATCC MYA-826 / Pb01) (Paracoccidioides brasiliensis), this protein is Cyanate hydratase.